The primary structure comprises 492 residues: Cytochrome P450 26A1 (492 aa).

Residue Cys-437 coordinates heme.

This sequence belongs to the cytochrome P450 family. Heme serves as cofactor.

Its subcellular location is the endoplasmic reticulum membrane. The protein resides in the microsome membrane. The catalysed reaction is all-trans-retinoate + reduced [NADPH--hemoprotein reductase] + O2 = all-trans-(4S)-hydroxyretinoate + oxidized [NADPH--hemoprotein reductase] + H2O + H(+). The enzyme catalyses all-trans-(4S)-hydroxyretinoate + reduced [NADPH--hemoprotein reductase] + O2 = all-trans-(4S,16)-dihydroxyretinoate + oxidized [NADPH--hemoprotein reductase] + H2O + H(+). It catalyses the reaction all-trans-retinoate + reduced [NADPH--hemoprotein reductase] + O2 = all-trans-18-hydroxyretinoate + oxidized [NADPH--hemoprotein reductase] + H2O + H(+). Its function is as follows. A cytochrome P450 monooxygenase involved in the metabolism of retinoates (RAs), the active metabolites of vitamin A, and critical signaling molecules in animals. RAs exist as at least four different isomers: all-trans-RA (atRA), 9-cis-RA, 13-cis-RA, and 9,13-dicis-RA, where atRA is considered to be the biologically active isomer, although 9-cis-RA and 13-cis-RA also have activity. Catalyzes the hydroxylation of atRA primarily at C-4 and C-18, thereby contributing to the regulation of atRA homeostasis and signaling. Hydroxylation of atRA limits its biological activity and initiates a degradative process leading to its eventual elimination. Involved in the convertion of atRA to all-trans-4-oxo-RA. Able to metabolize other RAs such as 9-cis, 13-cis and 9,13-di-cis RA. Can oxidize all-trans-13,14-dihydroretinoate (DRA) to metabolites which could include all-trans-4-oxo-DRA, all-trans-4-hydroxy-DRA, all-trans-5,8-epoxy-DRA, and all-trans-18-hydroxy-DRA. May play a role in the oxidative metabolism of xenobiotics such as tazarotenic acid. The chain is Cytochrome P450 26A1 (CYP26A1) from Gallus gallus (Chicken).